Here is a 388-residue protein sequence, read N- to C-terminus: Probable fatty acid desaturase DES1 (388 aa).

A disordered region spans residues Met-1 to Asp-33. The segment covering Val-9–Asp-30 has biased composition (basic and acidic residues). 2 helical membrane-spanning segments follow: residues Leu-62–Met-82 and Trp-85–Leu-105. Residues His-107 to His-111 carry the Histidine box-1 motif. A helical transmembrane segment spans residues Thr-119–Trp-139. The Histidine box-2 signature appears at His-143 to His-147. The next 3 membrane-spanning stretches (helical) occupy residues Ile-177 to Tyr-194, Trp-226 to Leu-246, and Met-248 to His-268. The Histidine box-3 signature appears at His-310–His-314.

The protein belongs to the fatty acid desaturase type 1 family. As to expression, highly expressed in root hair cells. Barely detected in panicle, shoot apex, stems and leaves.

Its subcellular location is the membrane. Its pathway is lipid metabolism; polyunsaturated fatty acid biosynthesis. This chain is Probable fatty acid desaturase DES1, found in Sorghum bicolor (Sorghum).